The sequence spans 160 residues: Ribosomal RNA large subunit methyltransferase H (160 aa).

S-adenosyl-L-methionine contacts are provided by Leu-76 and Gly-108.

Belongs to the RNA methyltransferase RlmH family. As to quaternary structure, homodimer.

It localises to the cytoplasm. It carries out the reaction pseudouridine(1915) in 23S rRNA + S-adenosyl-L-methionine = N(3)-methylpseudouridine(1915) in 23S rRNA + S-adenosyl-L-homocysteine + H(+). Functionally, specifically methylates the pseudouridine at position 1915 (m3Psi1915) in 23S rRNA. In Nitrobacter hamburgensis (strain DSM 10229 / NCIMB 13809 / X14), this protein is Ribosomal RNA large subunit methyltransferase H.